The sequence spans 490 residues: UDP-N-acetylmuramate--L-alanine ligase (490 aa).

130 to 136 lines the ATP pocket; the sequence is GTHGKTT.

Belongs to the MurCDEF family.

The protein localises to the cytoplasm. The enzyme catalyses UDP-N-acetyl-alpha-D-muramate + L-alanine + ATP = UDP-N-acetyl-alpha-D-muramoyl-L-alanine + ADP + phosphate + H(+). Its pathway is cell wall biogenesis; peptidoglycan biosynthesis. Functionally, cell wall formation. This chain is UDP-N-acetylmuramate--L-alanine ligase, found in Idiomarina loihiensis (strain ATCC BAA-735 / DSM 15497 / L2-TR).